The following is a 335-amino-acid chain: Eukaryotic translation initiation factor 3 subunit H-A (335 aa).

In terms of domain architecture, MPN spans 22 to 156; the sequence is IQVDGLVVLK…LKAYRLTPKL (135 aa). Residues 254–272 show a composition bias toward low complexity; that stretch reads QQQKQQYQQRRQQENAQRQ. Residues 254–282 are disordered; it reads QQQKQQYQQRRQQENAQRQSRGEPPLPEE.

It belongs to the eIF-3 subunit H family. Component of the eukaryotic translation initiation factor 3 (eIF-3) complex, which is composed of 13 subunits: eif3a, eif3b, eif3c, eif3d, eif3e, eif3f, eif3g, eif3h, eif3i, eif3j, eif3k, eif3l and eif3m.

The protein resides in the cytoplasm. Functionally, component of the eukaryotic translation initiation factor 3 (eIF-3) complex, which is involved in protein synthesis of a specialized repertoire of mRNAs and, together with other initiation factors, stimulates binding of mRNA and methionyl-tRNAi to the 40S ribosome. The eIF-3 complex specifically targets and initiates translation of a subset of mRNAs involved in cell proliferation. The sequence is that of Eukaryotic translation initiation factor 3 subunit H-A (eif3ha) from Danio rerio (Zebrafish).